The primary structure comprises 155 residues: Endoribonuclease YbeY (155 aa).

Zn(2+) contacts are provided by His-114, His-118, and His-124.

It belongs to the endoribonuclease YbeY family. It depends on Zn(2+) as a cofactor.

It is found in the cytoplasm. Functionally, single strand-specific metallo-endoribonuclease involved in late-stage 70S ribosome quality control and in maturation of the 3' terminus of the 16S rRNA. The chain is Endoribonuclease YbeY from Shigella dysenteriae serotype 1 (strain Sd197).